Reading from the N-terminus, the 263-residue chain is 2-keto-4-pentenoate hydratase 1 (263 aa).

It belongs to the hydratase/decarboxylase family. MhpD subfamily. It depends on a divalent metal cation as a cofactor.

It catalyses the reaction (S)-4-hydroxy-2-oxopentanoate = (2Z)-2-hydroxypenta-2,4-dienoate + H2O. The protein operates within aromatic compound metabolism; 3-phenylpropanoate degradation. Catalyzes the conversion of 2-hydroxypentadienoic acid (enolic form of 2-oxopent-4-enoate) to 4-hydroxy-2-ketopentanoic acid. In Dechloromonas aromatica (strain RCB), this protein is 2-keto-4-pentenoate hydratase 1.